The following is a 166-amino-acid chain: Phospholipase A2 inhibitor clone 06/08 (166 aa).

An N-terminal signal peptide occupies residues 1–19; that stretch reads MRLILLSGLLLLGIFLANG. The region spanning 46–161 is the C-type lectin domain; sequence LRGAFLTVYK…CDDNLLVVCE (116 aa). Asparagine 61 and asparagine 122 each carry an N-linked (GlcNAc...) asparagine glycan. Cystine bridges form between cysteine 83-cysteine 160 and cysteine 138-cysteine 152.

Belongs to the alpha-type phospholipase A2 inhibitor family. Homotrimer; non-covalently linked. Expressed by the liver.

The protein localises to the secreted. This phospholipase A2 inhibitor binds directly phospholipase A2 in the presence or absence of calcium. This is Phospholipase A2 inhibitor clone 06/08 from Bothrops neuwiedi (Neuwied's lancehead).